The sequence spans 108 residues: uncharacterized protein (108 aa).

This is an uncharacterized protein from Saccharomyces cerevisiae (strain ATCC 204508 / S288c) (Baker's yeast).